Consider the following 145-residue polypeptide: Small ribosomal subunit protein eS19 (145 aa).

K23 carries the N6-acetyllysine modification. The residue at position 67 (R67) is an Omega-N-methylarginine. K111 and K115 each carry N6-acetyllysine. The residue at position 143 (K143) is an N6-succinyllysine.

It belongs to the eukaryotic ribosomal protein eS19 family. In terms of assembly, component of the small ribosomal subunit. Part of the small subunit (SSU) processome, composed of more than 70 proteins and the RNA chaperone small nucleolar RNA (snoRNA) U3. Interacts with RPS19BP1; the interaction is direct and mediates the integration of RPS19 in state post-A1. Interacts with RPS19BP1.

It is found in the cytoplasm. The protein localises to the nucleus. Its subcellular location is the nucleolus. In terms of biological role, component of the small ribosomal subunit. The ribosome is a large ribonucleoprotein complex responsible for the synthesis of proteins in the cell. Required for pre-rRNA processing and maturation of 40S ribosomal subunits. Part of the small subunit (SSU) processome, first precursor of the small eukaryotic ribosomal subunit. During the assembly of the SSU processome in the nucleolus, many ribosome biogenesis factors, an RNA chaperone and ribosomal proteins associate with the nascent pre-rRNA and work in concert to generate RNA folding, modifications, rearrangements and cleavage as well as targeted degradation of pre-ribosomal RNA by the RNA exosome. This chain is Small ribosomal subunit protein eS19 (RPS19), found in Pongo abelii (Sumatran orangutan).